The following is a 590-amino-acid chain: Potassium-transporting ATPase potassium-binding subunit (590 aa).

10 helical membrane passes run 11-31 (IFIA…AAVF), 64-84 (TAYC…TYLI), 136-156 (GLAT…IAFI), 178-198 (ILWV…SQGV), 273-293 (MLEM…LGQM), 301-321 (WAVL…CYWA), 403-423 (AGLY…GLMV), 442-462 (AMLY…VAVL), 511-531 (LGFA…ALAG), and 552-572 (LFTV…FLPA).

This sequence belongs to the KdpA family. In terms of assembly, the system is composed of three essential subunits: KdpA, KdpB and KdpC.

It localises to the cell inner membrane. Part of the high-affinity ATP-driven potassium transport (or Kdp) system, which catalyzes the hydrolysis of ATP coupled with the electrogenic transport of potassium into the cytoplasm. This subunit binds the periplasmic potassium ions and delivers the ions to the membrane domain of KdpB through an intramembrane tunnel. The polypeptide is Potassium-transporting ATPase potassium-binding subunit (Acidobacterium capsulatum (strain ATCC 51196 / DSM 11244 / BCRC 80197 / JCM 7670 / NBRC 15755 / NCIMB 13165 / 161)).